The sequence spans 135 residues: HTH-type transcriptional regulator DicA (135 aa).

The HTH cro/C1-type domain occupies isoleucine 12 to isoleucine 66. Residues glutamine 23–arginine 42 constitute a DNA-binding region (H-T-H motif).

This protein is a repressor of division inhibition gene dicB. The protein is HTH-type transcriptional regulator DicA (dicA) of Escherichia coli (strain K12).